The primary structure comprises 957 residues: Leucine--tRNA ligase (957 aa).

A 'HIGH' region motif is present at residues 70–81 (PYPSGAGLHVGH). The short motif at 727–731 (KMGKS) is the 'KMSKS' region element. Lys730 contributes to the ATP binding site.

This sequence belongs to the class-I aminoacyl-tRNA synthetase family.

It localises to the cytoplasm. The enzyme catalyses tRNA(Leu) + L-leucine + ATP = L-leucyl-tRNA(Leu) + AMP + diphosphate. The protein is Leucine--tRNA ligase of Corynebacterium efficiens (strain DSM 44549 / YS-314 / AJ 12310 / JCM 11189 / NBRC 100395).